We begin with the raw amino-acid sequence, 898 residues long: Alanine--tRNA ligase (898 aa).

Positions 582, 586, 685, and 689 each coordinate Zn(2+).

The protein belongs to the class-II aminoacyl-tRNA synthetase family. Requires Zn(2+) as cofactor.

The protein localises to the cytoplasm. The catalysed reaction is tRNA(Ala) + L-alanine + ATP = L-alanyl-tRNA(Ala) + AMP + diphosphate. Catalyzes the attachment of alanine to tRNA(Ala) in a two-step reaction: alanine is first activated by ATP to form Ala-AMP and then transferred to the acceptor end of tRNA(Ala). Also edits incorrectly charged Ser-tRNA(Ala) and Gly-tRNA(Ala) via its editing domain. This Mycolicibacterium gilvum (strain PYR-GCK) (Mycobacterium gilvum (strain PYR-GCK)) protein is Alanine--tRNA ligase.